The sequence spans 425 residues: Probable mitochondrial import inner membrane translocase subunit tin-44 (425 aa).

Residues 38 to 149 (FLNNLIDNVR…EHVEKVAEKV (112 aa)) adopt a coiled-coil conformation.

This sequence belongs to the Tim44 family. In terms of assembly, probable component of the PAM complex at least composed of a mitochondrial HSP70 protein, GrpE, tin-44, tim-16 and tim-14/dnj-21. The complex interacts with the tim-23 component of the TIM23 complex.

The protein localises to the mitochondrion inner membrane. Its function is as follows. Essential component of the PAM complex, a complex required for the translocation of transit peptide-containing proteins from the inner membrane into the mitochondrial matrix in an ATP-dependent manner. Recruits mitochondrial HSP70 to drive protein translocation into the matrix using ATP as an energy source. The polypeptide is Probable mitochondrial import inner membrane translocase subunit tin-44 (Caenorhabditis elegans).